The following is a 610-amino-acid chain: Aspartate--tRNA(Asp/Asn) ligase (610 aa).

Residue glutamate 182 participates in L-aspartate binding. The segment at 206–209 (QLFK) is aspartate. Arginine 228 is a binding site for L-aspartate. ATP contacts are provided by residues 228–230 (RDE) and glutamine 237. L-aspartate is bound at residue histidine 470. Residue glutamate 506 coordinates ATP. Arginine 513 contributes to the L-aspartate binding site. Position 558–561 (558–561 (GLDR)) interacts with ATP.

Belongs to the class-II aminoacyl-tRNA synthetase family. Type 1 subfamily. As to quaternary structure, homodimer.

It localises to the cytoplasm. It carries out the reaction tRNA(Asx) + L-aspartate + ATP = L-aspartyl-tRNA(Asx) + AMP + diphosphate. Aspartyl-tRNA synthetase with relaxed tRNA specificity since it is able to aspartylate not only its cognate tRNA(Asp) but also tRNA(Asn). Reaction proceeds in two steps: L-aspartate is first activated by ATP to form Asp-AMP and then transferred to the acceptor end of tRNA(Asp/Asn). This is Aspartate--tRNA(Asp/Asn) ligase from Acidobacterium capsulatum (strain ATCC 51196 / DSM 11244 / BCRC 80197 / JCM 7670 / NBRC 15755 / NCIMB 13165 / 161).